A 339-amino-acid polypeptide reads, in one-letter code: MDETLAEFFRRTILKIPMTEMMTILKTWNFMSENQLQTVNFRQRKESIVQDLVLLCEENHASLNDAAHLDIIYTQFHRHQKIWDVFQMSKAPGDDIDLFDMEQFKSSFKKILQRALKNVTVSFRDAEENSVWIRIAWGTQYKKPNQYKPAYVVYYSQTPYAFTSSSRLKSNLPLLGQALTVASKHHQIVKMDLRSRYLDSLKAIVFKQYNQSFETHNCTTSLQEGSLGLDINMDSRIIHENKVEKERVQRVTQEIFGDYPQPRLEFAQYKLETKFKSDLNGGILAEREEPLRCLVKFSSPHLLEALKSLAPAGIADAPLSPLLTCIPNKGKNYFKIRDK.

2 positions are modified to phosphoserine: Ser226 and Ser235.

The protein belongs to the CENP-N/CHL4 family. In terms of assembly, component of the CENPA-NAC complex, at least composed of CENPA, CENPC, CENPH, CENPM, CENPN, CENPT and CENPU. The CENPA-NAC complex interacts with the CENPA-CAD complex, composed of CENPI, CENPK, CENPL, CENPO, CENPP, CENPQ, CENPR and CENPS. Interacts directly with CENPA. Identified in a centromere complex containing histones H2A, H2B and H4, and at least CENPA, CENPB, CENPC, CENPT, CENPN, HJURP, SUPT16H, SSRP1 and RSF1.

It localises to the nucleus. The protein resides in the chromosome. The protein localises to the centromere. Its subcellular location is the kinetochore. Its function is as follows. Component of the CENPA-NAC (nucleosome-associated) complex, a complex that plays a central role in assembly of kinetochore proteins, mitotic progression and chromosome segregation. The CENPA-NAC complex recruits the CENPA-CAD (nucleosome distal) complex and may be involved in incorporation of newly synthesized CENPA into centromeres. CENPN is the first protein to bind specifically to CENPA nucleosomes and the direct binding of CENPA nucleosomes by CENPN is required for centromere assembly. Required for chromosome congression and efficiently align the chromosomes on a metaphase plate. This Bos taurus (Bovine) protein is Centromere protein N (CENPN).